We begin with the raw amino-acid sequence, 425 residues long: MAAAVVDPQQSVVMRVANLPLVSSTYDLVSSAYVSTKDQYPYLRSVCEMAEKGVKTVTSAAMTSALPIIQKLEPQIAVANTYACKGLDRMEERLPILNQPTSEIVASARGAVTGAKDVVTTTMAGAKDSVASTVSGVVDKTKGAVTGSVERTKSVVNGSINTVLGMVQFMNSGVDNAITKSELLVDQYFPLTQEELEMEAKKVEGFDMVQKPSNYERLESLSTKLCSRAYHQALSRVKEAKQKSQETISQLHSTVHLIEFARKNMHSANQKIQGAQDKLYVSWVEWKRSIGYDDTDESHCVEHIESRTLAIARNLTQQLQTTCQTVLVNAQGLPQNIQDQAKHLGVMAGDIYSVFRNAASFKEVSDGVLTSSKGQLQKMKESLDEVMDYFVNNTPLNWLVGPFYPQSTEVNKASLKVQQSEVKAQ.

Residue alanine 2 is modified to N-acetylalanine. Serine 213 bears the Phosphoserine mark. Tyrosine 230 bears the Phosphotyrosine mark.

It belongs to the perilipin family. As to quaternary structure, interacts with IRGC. Acylated; primarily with C14, C16 and C18 fatty acids. In terms of processing, phosphorylation at Tyr-230 by isoform 1 of CHKA (CHKalpha2) promotes dissociation from lipid droplets: dissociation is followed by recruitment of autophagosome machinery to lipid droplets and subsequent lipid droplet lipolysis. Post-translationally, polyubiquitination of Nt-acetylatable A-PLIN2 by MARCHF6 lead to degradation by 26S proteasomes. As to expression, adipose tissue specific. Expressed abundantly and preferentially in fat pads.

It localises to the membrane. The protein resides in the lipid droplet. Structural component of lipid droplets, which is required for the formation and maintenance of lipid storage droplets. This is Perilipin-2 from Mus musculus (Mouse).